We begin with the raw amino-acid sequence, 356 residues long: DNA polymerase IV (356 aa).

The UmuC domain occupies 6 to 187 (IIHIDMDYFF…LDIGDFPGVG (182 aa)). Residues Asp10 and Asp105 each coordinate Mg(2+). Glu106 is a catalytic residue.

The protein belongs to the DNA polymerase type-Y family. As to quaternary structure, monomer. Mg(2+) is required as a cofactor.

It localises to the cytoplasm. It carries out the reaction DNA(n) + a 2'-deoxyribonucleoside 5'-triphosphate = DNA(n+1) + diphosphate. Functionally, poorly processive, error-prone DNA polymerase involved in untargeted mutagenesis. Copies undamaged DNA at stalled replication forks, which arise in vivo from mismatched or misaligned primer ends. These misaligned primers can be extended by PolIV. Exhibits no 3'-5' exonuclease (proofreading) activity. May be involved in translesional synthesis, in conjunction with the beta clamp from PolIII. This chain is DNA polymerase IV, found in Staphylococcus epidermidis (strain ATCC 35984 / DSM 28319 / BCRC 17069 / CCUG 31568 / BM 3577 / RP62A).